The sequence spans 481 residues: Glutamyl-tRNA(Gln) amidotransferase subunit A (481 aa).

Residues K79 and S154 each act as charge relay system in the active site. The segment at S136–G157 is disordered. S178 (acyl-ester intermediate) is an active-site residue.

The protein belongs to the amidase family. GatA subfamily. Heterotrimer of A, B and C subunits.

The catalysed reaction is L-glutamyl-tRNA(Gln) + L-glutamine + ATP + H2O = L-glutaminyl-tRNA(Gln) + L-glutamate + ADP + phosphate + H(+). Allows the formation of correctly charged Gln-tRNA(Gln) through the transamidation of misacylated Glu-tRNA(Gln) in organisms which lack glutaminyl-tRNA synthetase. The reaction takes place in the presence of glutamine and ATP through an activated gamma-phospho-Glu-tRNA(Gln). The chain is Glutamyl-tRNA(Gln) amidotransferase subunit A from Lachnospira eligens (strain ATCC 27750 / DSM 3376 / VPI C15-48 / C15-B4) (Eubacterium eligens).